A 151-amino-acid polypeptide reads, in one-letter code: Flagellar assembly factor FliW 2 (151 aa).

Belongs to the FliW family. Interacts with translational regulator CsrA and flagellin(s).

The protein resides in the cytoplasm. Functionally, acts as an anti-CsrA protein, binds CsrA and prevents it from repressing translation of its target genes, one of which is flagellin. Binds to flagellin and participates in the assembly of the flagellum. The sequence is that of Flagellar assembly factor FliW 2 from Desulfotalea psychrophila (strain LSv54 / DSM 12343).